We begin with the raw amino-acid sequence, 914 residues long: Protein translocase subunit SecA (914 aa).

ATP contacts are provided by residues Q87, 105–109, and D508; that span reads GEGKT. Zn(2+) is bound by residues C898, C900, C909, and H910.

It belongs to the SecA family. Monomer and homodimer. Part of the essential Sec protein translocation apparatus which comprises SecA, SecYEG and auxiliary proteins SecDF-YajC and YidC. Zn(2+) is required as a cofactor.

It is found in the cell inner membrane. Its subcellular location is the cytoplasm. It carries out the reaction ATP + H2O + cellular proteinSide 1 = ADP + phosphate + cellular proteinSide 2.. In terms of biological role, part of the Sec protein translocase complex. Interacts with the SecYEG preprotein conducting channel. Has a central role in coupling the hydrolysis of ATP to the transfer of proteins into and across the cell membrane, serving both as a receptor for the preprotein-SecB complex and as an ATP-driven molecular motor driving the stepwise translocation of polypeptide chains across the membrane. This is Protein translocase subunit SecA from Xylella fastidiosa (strain M23).